The following is a 179-amino-acid chain: 3-hydroxyanthranilate 3,4-dioxygenase (179 aa).

R47 is an O2 binding site. H51, E57, and H96 together coordinate Fe cation. E57 lines the substrate pocket. 2 residues coordinate substrate: R100 and E110. 4 residues coordinate Fe cation: C125, C128, C162, and C165.

The protein belongs to the 3-HAO family. The cofactor is Fe(2+).

The enzyme catalyses 3-hydroxyanthranilate + O2 = (2Z,4Z)-2-amino-3-carboxymuconate 6-semialdehyde. It functions in the pathway cofactor biosynthesis; NAD(+) biosynthesis; quinolinate from L-kynurenine: step 3/3. Catalyzes the oxidative ring opening of 3-hydroxyanthranilate to 2-amino-3-carboxymuconate semialdehyde, which spontaneously cyclizes to quinolinate. The sequence is that of 3-hydroxyanthranilate 3,4-dioxygenase from Bacillus cereus (strain ATCC 10987 / NRS 248).